Reading from the N-terminus, the 201-residue chain is Ciliary microtubule inner protein 2C (201 aa).

The protein belongs to the CIMIP2 family. As to quaternary structure, microtubule inner protein component of sperm flagellar doublet microtubules.

It is found in the cytoplasm. The protein localises to the cytoskeleton. It localises to the cilium axoneme. The protein resides in the flagellum axoneme. Its function is as follows. Microtubule inner protein (MIP) part of the dynein-decorated doublet microtubules (DMTs) in cilia axoneme, which is required for motile cilia beating. Binds to the intra-tubulin interfaces. The sequence is that of Ciliary microtubule inner protein 2C (CIMIP2C) from Bos taurus (Bovine).